A 60-amino-acid polypeptide reads, in one-letter code: Large ribosomal subunit protein uL30 (60 aa).

This sequence belongs to the universal ribosomal protein uL30 family. Part of the 50S ribosomal subunit.

The chain is Large ribosomal subunit protein uL30 from Burkholderia ambifaria (strain MC40-6).